The primary structure comprises 349 residues: Phenylalanine--tRNA ligase alpha subunit (349 aa).

A Mg(2+)-binding site is contributed by glutamate 258.

Belongs to the class-II aminoacyl-tRNA synthetase family. Phe-tRNA synthetase alpha subunit type 1 subfamily. As to quaternary structure, tetramer of two alpha and two beta subunits. Mg(2+) is required as a cofactor.

Its subcellular location is the cytoplasm. The enzyme catalyses tRNA(Phe) + L-phenylalanine + ATP = L-phenylalanyl-tRNA(Phe) + AMP + diphosphate + H(+). In Rickettsia rickettsii (strain Sheila Smith), this protein is Phenylalanine--tRNA ligase alpha subunit.